Here is a 419-residue protein sequence, read N- to C-terminus: MTKPRLFRLWLVLGSALMILLIIVYWDNVGTAHFYLHTSLSRPHILEPLPTQGLVEENVFTSDVDEFLDTLLSSDAKHNDLSRRKTEQPPVPAPSKPVLSHMEENVRGYDWSTHDAHQNPDRDRQQAERRSLLRDFCANASLAFPTKDRSFDDIPNYELNHLIVDDRHGVIYCYVPKVACTNWKRVMIVLSESLLDRGSPYRDPLDIPREHVHNTSTHLTFNKFWRRYGKFSRHLMKVKLKKYTKFLFVRDPFVRLISAFRSKFELENEEFYRKFAVPMLRLYANHTSLPASVSEAFSAGLKVSFANFIQYLLDPHTEKLAPFNEHWRQVYRLCHPCQIDYDFVGKLETLDEDAAQLLRFLKVDSQLHFPPSYRNRTASSWEEDWFANIPLAWRQQLYKLYEADFVLFGYPKPENLLRD.

The Cytoplasmic segment spans residues 1–5; it reads MTKPR. A helical; Signal-anchor for type II membrane protein membrane pass occupies residues 6-26; sequence LFRLWLVLGSALMILLIIVYW. The Lumenal portion of the chain corresponds to 27 to 419; it reads DNVGTAHFYL…YPKPENLLRD (393 aa). Basic and acidic residues predominate over residues 78–87; the sequence is HNDLSRRKTE. The tract at residues 78–99 is disordered; it reads HNDLSRRKTEQPPVPAPSKPVL. N139 carries an N-linked (GlcNAc...) asparagine glycan. 176–182 contributes to the 3'-phosphoadenylyl sulfate binding site; the sequence is PKVACTN. The N-linked (GlcNAc...) asparagine glycan is linked to N214. 3'-phosphoadenylyl sulfate is bound at residue 250–258; sequence RDPFVRLIS. N-linked (GlcNAc...) asparagine glycans are attached at residues N285 and N375.

It belongs to the sulfotransferase 2 family.

It localises to the golgi apparatus membrane. It carries out the reaction chondroitin beta-D-glucuronate + n 3'-phosphoadenylyl sulfate = chondroitin 4'-sulfate + n adenosine 3',5'-bisphosphate + n H(+). Functionally, catalyzes the transfer of sulfate to position 4 of the N-acetylgalactosamine (GalNAc) residue of chondroitin and desulfated dermatan sulfate. Chondroitin sulfate constitutes the predominant proteoglycan present in cartilage and is distributed on the surfaces of many cells and extracellular matrices. Activity toward partially desulfated dermatan sulfate is however lower. Does not form 4, 6-di-O-sulfated GalNAc when chondroitin sulfate C is used as an acceptor. This is Carbohydrate sulfotransferase 12 (Chst12) from Mus musculus (Mouse).